The chain runs to 96 residues: Translation initiation factor 1A 1 (96 aa).

The region spanning 8 to 82 (GSHDLRMPDD…EKGDITWRYE (75 aa)) is the S1-like domain.

This sequence belongs to the eIF-1A family.

In terms of biological role, seems to be required for maximal rate of protein biosynthesis. Enhances ribosome dissociation into subunits and stabilizes the binding of the initiator Met-tRNA(I) to 40 S ribosomal subunits. This chain is Translation initiation factor 1A 1, found in Haloquadratum walsbyi (strain DSM 16790 / HBSQ001).